Consider the following 233-residue polypeptide: UPF0502 protein Mpe_A1449 (233 aa).

This sequence belongs to the UPF0502 family.

The polypeptide is UPF0502 protein Mpe_A1449 (Methylibium petroleiphilum (strain ATCC BAA-1232 / LMG 22953 / PM1)).